A 109-amino-acid chain; its full sequence is U26-theraphotoxin-Cg1a (109 aa).

The first 18 residues, 1–18, serve as a signal peptide directing secretion; the sequence is MNTIIPLLLLSLLITVYA. Residues 19–67 constitute a propeptide that is removed on maturation; it reads YALEDGNKEEIQDIAESEFEASNEMLQLAHLLEADRAETEEDRNSRQKR. 3 cysteine pairs are disulfide-bonded: cysteine 68-cysteine 83, cysteine 75-cysteine 88, and cysteine 82-cysteine 103.

The protein belongs to the neurotoxin 14 (magi-1) family. 07 (Jztx-56) subfamily. Expressed by the venom gland.

The protein resides in the secreted. Probable ion channel inhibitor. This Chilobrachys guangxiensis (Chinese earth tiger tarantula) protein is U26-theraphotoxin-Cg1a.